The sequence spans 570 residues: Proline--tRNA ligase (570 aa).

It belongs to the class-II aminoacyl-tRNA synthetase family. ProS type 1 subfamily. Homodimer.

The protein resides in the cytoplasm. It catalyses the reaction tRNA(Pro) + L-proline + ATP = L-prolyl-tRNA(Pro) + AMP + diphosphate. Functionally, catalyzes the attachment of proline to tRNA(Pro) in a two-step reaction: proline is first activated by ATP to form Pro-AMP and then transferred to the acceptor end of tRNA(Pro). As ProRS can inadvertently accommodate and process non-cognate amino acids such as alanine and cysteine, to avoid such errors it has two additional distinct editing activities against alanine. One activity is designated as 'pretransfer' editing and involves the tRNA(Pro)-independent hydrolysis of activated Ala-AMP. The other activity is designated 'posttransfer' editing and involves deacylation of mischarged Ala-tRNA(Pro). The misacylated Cys-tRNA(Pro) is not edited by ProRS. This chain is Proline--tRNA ligase, found in Shewanella sp. (strain MR-4).